The sequence spans 423 residues: Structure-specific endonuclease subunit SLX1 (423 aa).

Positions 23–105 (AFYCCYLLRS…QNTKVSRHAD (83 aa)) constitute a GIY-YIG domain. Disordered regions lie at residues 300-334 (RRRR…DALQ) and 365-406 (AHRP…LGLQ).

The protein belongs to the SLX1 family. As to quaternary structure, forms a heterodimer with SLX4. It depends on a divalent metal cation as a cofactor.

It is found in the nucleus. Its function is as follows. Catalytic subunit of the SLX1-SLX4 structure-specific endonuclease that resolves DNA secondary structures generated during DNA repair and recombination. Has endonuclease activity towards branched DNA substrates, introducing single-strand cuts in duplex DNA close to junctions with ss-DNA. The polypeptide is Structure-specific endonuclease subunit SLX1 (Paracoccidioides brasiliensis (strain Pb03)).